Reading from the N-terminus, the 180-residue chain is Calcineurin subunit B type 1 (180 aa).

Residue G2 is the site of N-myristoyl glycine attachment. EF-hand domains lie at 25-60, 62-92, 94-129, and 135-170; these read AELK…ALNP, LERV…LSHK, TKED…MVGT, and QLQQ…QEGI. D38, D40, S42, T44, E49, D70, N72, D74, E76, E81, D107, D109, D111, and E118 together coordinate Ca(2+). The interval 138–143 is canA/calcineurin A binding; sequence QIVDKT. D148, D150, D152, K154, and E159 together coordinate Ca(2+).

The protein belongs to the calcineurin regulatory subunit family. As to quaternary structure, forms a complex composed of a calmodulin-dependent catalytic subunit canA (also known as calcineurin A) and a regulatory Ca(2+)-binding subunit cnbA (also known as calcineurin B).

Its function is as follows. Regulatory subunit of calcineurin, a calcium-dependent, calmodulin stimulated protein phosphatase. Confers calcium sensitivity. Important for stalk formation. The protein is Calcineurin subunit B type 1 (cnbA) of Dictyostelium discoideum (Social amoeba).